The following is a 409-amino-acid chain: MNVSAIVVEYNPMHNGHLYHIEKTKKLTNCDALVCIMSGNFVQRGFPSILDKWTKANMAISNGVDLVIELPTLYSLSSAEFFSFGAVSILDSLNIINSICFGSEIGNINVLQDIATTLLEEPLEYKILLKNYLDKGISFAKARNLALVELNRDNKIMSENISKILSLSNNILGIEYLKSLLLLNSSIKPFTITREGADYKDENLHEEYSSASSIRKYLKENKNINILKDFLPLEGFLEFKRLITKGYNFSMEDSMINYIRYKYISGYKNLHNLIDVSEGLDNRIYKSLEKSFTYDSLVGEIKSKRYAYSRIGRILCQYFIGFENYDLNSLLKSTPNYMRVLASNERGLKVLKEVKKHSSINIYTKLPKNTNTLLSLDIKATNAYSLLNNNIRFNEDYFRSPTIIKNTIY.

ATP-binding positions include 7-20, G102, N169, and R194; that span reads VVEY…HLYH.

This sequence belongs to the TmcAL family.

Its subcellular location is the cytoplasm. The enzyme catalyses cytidine(34) in elongator tRNA(Met) + acetate + ATP = N(4)-acetylcytidine(34) in elongator tRNA(Met) + AMP + diphosphate. Functionally, catalyzes the formation of N(4)-acetylcytidine (ac(4)C) at the wobble position of elongator tRNA(Met), using acetate and ATP as substrates. First activates an acetate ion to form acetyladenylate (Ac-AMP) and then transfers the acetyl group to tRNA to form ac(4)C34. This Clostridium botulinum (strain Okra / Type B1) protein is tRNA(Met) cytidine acetate ligase.